A 255-amino-acid chain; its full sequence is Alkaline ceramidase (255 aa).

Topologically, residues 1-28 are lumenal; that stretch reads MADGISSFWGPVTSTIECCEMNYAYSSY. The helical transmembrane segment at 29-49 threads the bilayer; sequence IAEFYNTISNVPGILLALIGL. Residues 50 to 60 are Cytoplasmic-facing; sequence VNALRQRFEKR. Residues 61–81 form a helical membrane-spanning segment; it reads FSILHISNMILAIGSMLYHAT. Histidine 79 provides a ligand contact to Zn(2+). Topologically, residues 82–91 are lumenal; the sequence is LQHVQQQSDE. A helical membrane pass occupies residues 92–112; it reads TPMVWEILLYMYILYSPDWHY. The Cytoplasmic portion of the chain corresponds to 113–118; that stretch reads RSTMPT. 2 consecutive transmembrane segments (helical) span residues 119–139 and 140–160; these read FLFL…FGIG and FKVH…KYYI. Residues 161–169 are Cytoplasmic-facing; it reads HTEDTAAKR. Residues 170–192 traverse the membrane as a helical segment; it reads IAKWYVATILVGSICWFCDRVFC. Over 193 to 205 the chain is Lumenal; that stretch reads KTISQWPVNPQGH. Zn(2+) contacts are provided by histidine 205 and histidine 209. A helical transmembrane segment spans residues 206-226; that stretch reads ALWHVFMSFNSYCANTFLMFC. Over 227-255 the chain is Cytoplasmic; it reads RAQQRGWNPKVKYFLGVLPYVKIEKPKTQ.

It belongs to the alkaline ceramidase family. The cofactor is Zn(2+). As to expression, mostly expressed in roots, shoot meristems and pollen, and, to a lower extent, in mature leaves.

The protein localises to the endoplasmic reticulum membrane. It is found in the golgi apparatus membrane. Hydrolyzes only phytoceramide into phytosphingosine and free fatty acid. Does not have reverse activity. Affects plant morphogenesis. Required for the formation of wax layer that ensure cuticle permeability. Implicated in abscisic acid (ABA)-mediated stomatal closure. Involved in both biotic and abiotic stresses. Promotes salt resistance and defenses responses toward pathogenic bacteria (e.g. P.syringae) and against the fungal toxin fumonisin B1 (FB1). The chain is Alkaline ceramidase from Arabidopsis thaliana (Mouse-ear cress).